A 110-amino-acid chain; its full sequence is Glutaredoxin-1 (110 aa).

One can recognise a Glutaredoxin domain in the interval 7–110 (IKHVKDLIAE…EELLEPILAN (104 aa)). Lysine 11 participates in a covalent cross-link: Glycyl lysine isopeptide (Lys-Gly) (interchain with G-Cter in ubiquitin). Glutathione is bound by residues 24–29 (KTYCPY), glutamine 63, valine 75, and 88–89 (ND). Residue cysteine 27 is modified to S-glutathionyl cysteine; alternate. Cysteine 27 and cysteine 30 form a disulfide bridge.

This sequence belongs to the glutaredoxin family.

Its subcellular location is the cytoplasm. The protein localises to the nucleus. The catalysed reaction is 2 glutathione + H2O2 = glutathione disulfide + 2 H2O. The enzyme catalyses 1-chloro-2,4-dinitrobenzene + glutathione = 2,4-dinitrophenyl-S-glutathione + chloride + H(+). It carries out the reaction RX + glutathione = an S-substituted glutathione + a halide anion + H(+). Component of the glutathione system which performs several activities such as glutathione-dependent oxidoreductase, glutathione peroxidase and glutathione S-transferase (GST) activity. The disulfide bond functions as an electron carrier in the glutathione-dependent synthesis of deoxyribonucleotides by the enzyme ribonucleotide reductase. In addition, it is also involved in reducing cytosolic protein- and non-protein-disulfides in a coupled system with glutathione reductase. Required for resistance to reactive oxygen species (ROS) by directly reducing hydroperoxides and for the detoxification of ROS-mediated damage. GRX1 is less active as an oxidoreductase than GRX2. In Saccharomyces cerevisiae (strain ATCC 204508 / S288c) (Baker's yeast), this protein is Glutaredoxin-1 (GRX1).